Here is a 118-residue protein sequence, read N- to C-terminus: Peptidyl-tRNA hydrolase (118 aa).

Belongs to the PTH2 family.

Its subcellular location is the cytoplasm. It carries out the reaction an N-acyl-L-alpha-aminoacyl-tRNA + H2O = an N-acyl-L-amino acid + a tRNA + H(+). Its function is as follows. The natural substrate for this enzyme may be peptidyl-tRNAs which drop off the ribosome during protein synthesis. This is Peptidyl-tRNA hydrolase from Thermococcus onnurineus (strain NA1).